The primary structure comprises 277 residues: Shikimate dehydrogenase (NADP(+)) (277 aa).

Shikimate-binding positions include 15-17 (SKS) and threonine 64. Lysine 68 functions as the Proton acceptor in the catalytic mechanism. Shikimate is bound by residues asparagine 89 and aspartate 104. NADP(+) is bound by residues 129-133 (GAGGA), 153-158 (NRTAKR), and methionine 217. Tyrosine 219 contributes to the shikimate binding site. Glycine 242 contacts NADP(+).

It belongs to the shikimate dehydrogenase family. Homodimer.

The catalysed reaction is shikimate + NADP(+) = 3-dehydroshikimate + NADPH + H(+). Its pathway is metabolic intermediate biosynthesis; chorismate biosynthesis; chorismate from D-erythrose 4-phosphate and phosphoenolpyruvate: step 4/7. Involved in the biosynthesis of the chorismate, which leads to the biosynthesis of aromatic amino acids. Catalyzes the reversible NADPH linked reduction of 3-dehydroshikimate (DHSA) to yield shikimate (SA). The protein is Shikimate dehydrogenase (NADP(+)) of Hydrogenovibrio crunogenus (strain DSM 25203 / XCL-2) (Thiomicrospira crunogena).